A 539-amino-acid polypeptide reads, in one-letter code: Chaperonin GroEL (539 aa).

ATP contacts are provided by residues 30 to 33, K51, 87 to 91, G415, 479 to 481, and D495; these read TLGP, DGTTT, and NAA.

It belongs to the chaperonin (HSP60) family. In terms of assembly, forms a cylinder of 14 subunits composed of two heptameric rings stacked back-to-back. Interacts with the co-chaperonin GroES.

The protein localises to the cytoplasm. The catalysed reaction is ATP + H2O + a folded polypeptide = ADP + phosphate + an unfolded polypeptide.. Together with its co-chaperonin GroES, plays an essential role in assisting protein folding. The GroEL-GroES system forms a nano-cage that allows encapsulation of the non-native substrate proteins and provides a physical environment optimized to promote and accelerate protein folding. The polypeptide is Chaperonin GroEL (Kluyvera intermedia (Enterobacter intermedius)).